The primary structure comprises 897 residues: MGMATYAVVDLETTGNQLDFDDIIQIGITFVRNNQIIDTYHSMIRTNLEIPPFIQALTSIEENMLQQAPYFNQVAQEIYDKIKDCIFVAHNVDFDLNFIKKAFKDCNIQYRPKKVIDTLEIFKIAFPTDKSYQLSELAEAHGITLANAHRADEDAATTAKLMILAFEKFEKLPLDTLKQLYYLSKQLKYDLYDIFFEMVRQYDAKPLDKSYEKFEQIIYRKQVDFKKPTTNYNGSLKSLYSKAVDQLGLTYRPQQLYLAETILDQLMHSEKAMIEASLGSGKSLAYLLAALMYNIETGKHVMISTNTKLLQSQLLEKDIPAMNEALNFKINALLIKSKSDYISLGLISQILKDDTSNYEVNILKMQLLIWITETPSGDIQELNLKGGQKMYFDQKIETYVPARHDVHYYNFIKRNAQNIQIGITNHAHLIHSDVENSIYQLFDDCIVDEAHRLPDYALNQVTNELSYADIKYQLGLIGKNENEKLLKAIDQLEKQRILEKLDIAPIDIFGLKASMNEIHELNEQLFSTIFTIINDSDVYDDDIHRFHNVFTFETKDILKDLHAIIDKLNKTLEIFNGISHKTVKSLRKQLLYLKDKFKNIEQSLKAGHTSFISIKNLSQKSTIRLYVKDYAVKDVLTKQVLEKFKSLIFISGTLKFNHSFEAFKQLFNKDVHFNTFEVNTSLQSAKNTSVFIPSDVASYQYKNIDEYVASIVSYIIEYTTITSSKCLVLFTSYKMMHMVQDMLNELPEFEDYVVLTQQQNQNYKIVQQFNNFDKAILLGTSTFFEGFDFQANGIKCVMIAKLPFMNKHNAKYWLMDSEFTSTFKEYVLPDAVTRFRQGLGRLIRSENDRGIIVSFDDRLINSNYKNFFEQTLENYRQKKGDIQQFGKLLRQIQKKKK.

The Exonuclease domain maps to 8–161 (VVDLETTGNQ…DEDAATTAKL (154 aa)). Positions 241–496 (SKAVDQLGLT…KAIDQLEKQR (256 aa)) constitute a Helicase ATP-binding domain. 276-283 (ASLGSGKS) lines the ATP pocket. Residues 448-451 (DEAH) carry the DEAH box motif. One can recognise a Helicase C-terminal domain in the interval 703–893 (NIDEYVASIV…QFGKLLRQIQ (191 aa)).

It belongs to the helicase family. DinG subfamily. Type 2 sub-subfamily.

3'-5' exonuclease. This is 3'-5' exonuclease DinG from Staphylococcus aureus (strain MSSA476).